The chain runs to 276 residues: Hydroxymethylpyrimidine/phosphomethylpyrimidine kinase (276 aa).

Position 45 (Gln-45) interacts with 4-amino-5-hydroxymethyl-2-methylpyrimidine.

It belongs to the ThiD family.

The enzyme catalyses 4-amino-5-hydroxymethyl-2-methylpyrimidine + ATP = 4-amino-2-methyl-5-(phosphooxymethyl)pyrimidine + ADP + H(+). It catalyses the reaction 4-amino-2-methyl-5-(phosphooxymethyl)pyrimidine + ATP = 4-amino-2-methyl-5-(diphosphooxymethyl)pyrimidine + ADP. It participates in cofactor biosynthesis; thiamine diphosphate biosynthesis; 4-amino-2-methyl-5-diphosphomethylpyrimidine from 5-amino-1-(5-phospho-D-ribosyl)imidazole: step 2/3. Its pathway is cofactor biosynthesis; thiamine diphosphate biosynthesis; 4-amino-2-methyl-5-diphosphomethylpyrimidine from 5-amino-1-(5-phospho-D-ribosyl)imidazole: step 3/3. Functionally, catalyzes the phosphorylation of hydroxymethylpyrimidine phosphate (HMP-P) to HMP-PP, and of HMP to HMP-P. The polypeptide is Hydroxymethylpyrimidine/phosphomethylpyrimidine kinase (thiD) (Staphylococcus aureus (strain MSSA476)).